We begin with the raw amino-acid sequence, 388 residues long: UTP--glucose-1-phosphate uridylyltransferase (388 aa).

Asp-118 serves as a coordination point for Mg(2+).

This sequence belongs to the CugP-type UDP-glucose pyrophosphorylase family. It depends on Mg(2+) as a cofactor.

It catalyses the reaction alpha-D-glucose 1-phosphate + UTP + H(+) = UDP-alpha-D-glucose + diphosphate. In terms of biological role, catalyzes the formation of UDP-glucose, from UTP and glucose 1-phosphate. Is highly specific since it cannot use other NTPs such as dTTP, CTP, ATP, and GTP, and other sugar-1P such as GlcNAc-1P, Gal-1P, and Man-1P, as substrates. Has probably a central and essential role as the substrate supplier for galactolipid synthesis; galactolipids are major constituents of the photosynthetic thylakoid membrane and important for photosynthetic activity. The protein is UTP--glucose-1-phosphate uridylyltransferase of Synechocystis sp. (strain ATCC 27184 / PCC 6803 / Kazusa).